The chain runs to 1210 residues: Epidermal growth factor receptor (1210 aa).

An N-terminal signal peptide occupies residues M1–A24. At L25 to S645 the chain is on the extracellular side. C31 and C58 form a disulfide bridge. N-linked (GlcNAc...) (complex) asparagine; atypical; partial glycosylation occurs at N56. N73 carries N-linked (GlcNAc...) asparagine; atypical glycosylation. The Approximate repeat unit spans residues D75–V300. N-linked (GlcNAc...) asparagine glycans are attached at residues N128, N175, and N196. 13 cysteine pairs are disulfide-bonded: C157/C187, C190/C199, C194/C207, C215/C223, C219/C231, C232/C240, C236/C248, C251/C260, C264/C291, C295/C307, C311/C326, C329/C333, and C337/C362. At S229 the chain carries Phosphoserine. 4 N-linked (GlcNAc...) asparagine glycosylation sites follow: N352, N361, N413, and N444. An Approximate repeat occupies Q390 to M600. Disulfide bonds link C470/C499, C506/C515, C510/C523, C526/C535, C539/C555, C558/C571, C562/C579, C582/C591, C595/C617, C620/C628, and C624/C636. A glycan (N-linked (GlcNAc...) asparagine) is linked at N528. The N-linked (GlcNAc...) asparagine; partial glycan is linked to N568. N603 carries an N-linked (GlcNAc...) asparagine; partial glycan. The N-linked (GlcNAc...) (high mannose) asparagine glycan is linked to N623. The helical transmembrane segment at I646–M668 threads the bilayer. Over R669–A1210 the chain is Cytoplasmic. T678 is modified (phosphothreonine; by PKC and PKD/PRKD1). Positions L688 to L704 are important for dimerization, phosphorylation and activation. A Phosphothreonine; by PKD/PRKD1 modification is found at T693. S695 is subject to Phosphoserine. In terms of domain architecture, Protein kinase spans F712–L979. Residue K716 forms a Glycyl lysine isopeptide (Lys-Gly) (interchain with G-Cter in ubiquitin) linkage. L718–V726 lines the ATP pocket. A Glycyl lysine isopeptide (Lys-Gly) (interchain with G-Cter in ubiquitin) cross-link involves residue K737. ATP is bound at residue K745. K745 carries the post-translational modification N6-(2-hydroxyisobutyryl)lysine. Glycyl lysine isopeptide (Lys-Gly) (interchain with G-Cter in ubiquitin) cross-links involve residues K754 and K757. T790–Q791 is a binding site for ATP. D837 (proton acceptor) is an active-site residue. ATP is bound at residue D855. A Glycyl lysine isopeptide (Lys-Gly) (interchain with G-Cter in ubiquitin) cross-link involves residue K867. At Y869 the chain carries Phosphotyrosine. Glycyl lysine isopeptide (Lys-Gly) (interchain with G-Cter in ubiquitin) cross-links involve residues K929, K960, and K970. A phosphoserine mark is found at S991 and S995. Y998 and Y1016 each carry phosphotyrosine; by autocatalysis. A phosphoserine mark is found at S1026 and S1039. Phosphothreonine is present on T1041. The residue at position 1042 (S1042) is a Phosphoserine. The S-palmitoyl cysteine moiety is linked to residue C1049. S1064 is subject to Phosphoserine. Y1069 carries the phosphotyrosine modification. Phosphoserine is present on residues S1070, S1071, and S1081. Y1092 and Y1110 each carry phosphotyrosine; by autocatalysis. The disordered stretch occupies residues V1097–E1137. Composition is skewed to polar residues over residues S1104–L1115 and P1128–E1137. Residue C1146 is the site of S-palmitoyl cysteine attachment. S1166 is subject to Phosphoserine. Phosphotyrosine; by autocatalysis occurs at positions 1172 and 1197. At R1199 the chain carries Omega-N-methylarginine.

This sequence belongs to the protein kinase superfamily. Tyr protein kinase family. EGF receptor subfamily. In terms of assembly, binding of the ligand triggers homo- and/or heterodimerization of the receptor triggering its autophosphorylation. Heterodimer with ERBB2. Forms a complex with CCDC88A/GIV (via SH2-like regions) and GNAI3 which leads to enhanced EGFR signaling and triggering of cell migration; binding to CCDC88A requires autophosphorylation of the EGFR C-terminal region, and ligand stimulation is required for recruitment of GNAI3 to the complex. Interacts with ERRFI1; inhibits dimerization of the kinase domain and autophosphorylation. Part of a complex with ERBB2 and either PIK3C2A or PIK3C2B. Interacts with GRB2; an adapter protein coupling the receptor to downstream signaling pathways. Interacts with GAB2; involved in signaling downstream of EGFR. Interacts with STAT3; mediates EGFR downstream signaling in cell proliferation. Interacts with RIPK1; involved in NF-kappa-B activation. Interacts (autophosphorylated) with CBL, CBLB and CBLC; involved in EGFR ubiquitination and regulation; interaction with CBL is reduced in the presence of tensin TNS4. Interacts with SOCS5; regulates EGFR degradation through ELOC- and ELOB-mediated ubiquitination and proteasomal degradation. Interacts with PRMT5; methylates EGFR and enhances interaction with PTPN6. Interacts (phosphorylated) with PTPN6; inhibits EGFR-dependent activation of MAPK/ERK. Interacts with COPG1; essential for regulation of EGF-dependent nuclear transport of EGFR by retrograde trafficking from the Golgi to the ER. Interacts with TNK2; this interaction is dependent on EGF stimulation and kinase activity of EGFR. Interacts with PCNA; positively regulates PCNA. Interacts with PELP1. Interacts with MUC1. Interacts with AP2M1. Interacts with FER. May interact with EPS8; mediates EPS8 phosphorylation. Interacts (via SH2 domains) with GRB2, NCK1 and NCK2. Interacts with ATXN2. Interacts with GAREM1. Interacts (ubiquitinated) with ANKRD13A/B/D; the interaction is direct and may regulate EGFR internalization after EGF stimulation. Interacts with GPER1; the interaction occurs in an estrogen-dependent manner. Interacts (via C-terminal cytoplasmic kinase domain) with ZPR1 (via zinc fingers). Interacts with RNF115 and RNF126. Interacts with GPRC5A (via its transmembrane domain). Interacts with FAM83B; positively regulates EGFR inducing its autophosphorylation in absence of stimulation by EGF. Interacts with LAPTM4B; positively correlates with EGFR activation. Interacts with STX19. Interacts with CD44. Interacts with PGRMC1; the interaction requires PGRMC1 homodimerization. Interacts with PIKFYVE. Interacts with NEU3. Interacts with TRAF4. Interacts with the ant venom OMEGA-myrmeciitoxin(02)-Mg1a. Interacts with CD82; this interaction facilitates ligand-induced endocytosis of the receptor and its subsequent desensitization. Phosphorylated on Tyr residues in response to EGF. Phosphorylation at Ser-695 is partial and occurs only if Thr-693 is phosphorylated. Phosphorylation at Thr-678 and Thr-693 by PRKD1 inhibits EGF-induced MAPK8/JNK1 activation. Dephosphorylation by PTPRJ prevents endocytosis and stabilizes the receptor at the plasma membrane. Autophosphorylation at Tyr-1197 is stimulated by methylation at Arg-1199 and enhances interaction with PTPN6. Autophosphorylation at Tyr-1092 and/or Tyr-1110 recruits STAT3. Dephosphorylated by PTPN1 and PTPN2. In terms of processing, monoubiquitinated and polyubiquitinated upon EGF stimulation; which does not affect tyrosine kinase activity or signaling capacity but may play a role in lysosomal targeting. Polyubiquitin linkage is mainly through 'Lys-63', but linkage through 'Lys-48', 'Lys-11' and 'Lys-29' also occurs. Deubiquitination by OTUD7B prevents degradation. Ubiquitinated by RNF115 and RNF126. Ubiquitinated by ZNRF1 or CBL at different lysines in response to EGF stimulation; leading to recruitment of the ESCRT machinery and subsequent degradation in the lysosomes. Deubiquitinated by UCHL1 leading to the inhibition of its degradation. Post-translationally, palmitoylated on Cys residues by ZDHHC20. Palmitoylation inhibits internalization after ligand binding, and increases the persistence of tyrosine-phosphorylated EGFR at the cell membrane. Palmitoylation increases the amplitude and duration of EGFR signaling. Methylated. Methylation at Arg-1199 by PRMT5 stimulates phosphorylation at Tyr-1197. In terms of tissue distribution, ubiquitously expressed. Isoform 2 is also expressed in ovarian cancers.

It is found in the cell membrane. Its subcellular location is the endoplasmic reticulum membrane. The protein resides in the golgi apparatus membrane. The protein localises to the nucleus membrane. It localises to the endosome. It is found in the endosome membrane. Its subcellular location is the nucleus. The protein resides in the secreted. It carries out the reaction L-tyrosyl-[protein] + ATP = O-phospho-L-tyrosyl-[protein] + ADP + H(+). Endocytosis and inhibition of the activated EGFR by phosphatases like PTPRJ and PTPRK constitute immediate regulatory mechanisms. Upon EGF-binding phosphorylates EPS15 that regulates EGFR endocytosis and activity. Moreover, inducible feedback inhibitors including LRIG1, SOCS4, SOCS5 and ERRFI1 constitute alternative regulatory mechanisms for the EGFR signaling. Up-regulated by NEU3-mediated desialylation of N-linked glycan at Asn-528. Its function is as follows. Receptor tyrosine kinase binding ligands of the EGF family and activating several signaling cascades to convert extracellular cues into appropriate cellular responses. Known ligands include EGF, TGFA/TGF-alpha, AREG, epigen/EPGN, BTC/betacellulin, epiregulin/EREG and HBEGF/heparin-binding EGF. Ligand binding triggers receptor homo- and/or heterodimerization and autophosphorylation on key cytoplasmic residues. The phosphorylated receptor recruits adapter proteins like GRB2 which in turn activates complex downstream signaling cascades. Activates at least 4 major downstream signaling cascades including the RAS-RAF-MEK-ERK, PI3 kinase-AKT, PLCgamma-PKC and STATs modules. May also activate the NF-kappa-B signaling cascade. Also directly phosphorylates other proteins like RGS16, activating its GTPase activity and probably coupling the EGF receptor signaling to the G protein-coupled receptor signaling. Also phosphorylates MUC1 and increases its interaction with SRC and CTNNB1/beta-catenin. Positively regulates cell migration via interaction with CCDC88A/GIV which retains EGFR at the cell membrane following ligand stimulation, promoting EGFR signaling which triggers cell migration. Plays a role in enhancing learning and memory performance. Plays a role in mammalian pain signaling (long-lasting hypersensitivity). Functionally, isoform 2 may act as an antagonist of EGF action. In terms of biological role, (Microbial infection) Acts as a receptor for hepatitis C virus (HCV) in hepatocytes and facilitates its cell entry. Mediates HCV entry by promoting the formation of the CD81-CLDN1 receptor complexes that are essential for HCV entry and by enhancing membrane fusion of cells expressing HCV envelope glycoproteins. In Homo sapiens (Human), this protein is Epidermal growth factor receptor.